The sequence spans 98 residues: Large ribosomal subunit protein bL28 (98 aa).

Belongs to the bacterial ribosomal protein bL28 family.

The sequence is that of Large ribosomal subunit protein bL28 from Phenylobacterium zucineum (strain HLK1).